Here is a 157-residue protein sequence, read N- to C-terminus: Probable Brix domain-containing ribosomal biogenesis protein (157 aa).

In terms of domain architecture, Brix spans 1-157; sequence MLVTTSRKPS…KFNIKGFKKY (157 aa).

Functionally, probably involved in the biogenesis of the ribosome. In Methanosarcina mazei (strain ATCC BAA-159 / DSM 3647 / Goe1 / Go1 / JCM 11833 / OCM 88) (Methanosarcina frisia), this protein is Probable Brix domain-containing ribosomal biogenesis protein.